Here is a 346-residue protein sequence, read N- to C-terminus: Sugar utilization regulatory protein IMP2 (346 aa).

Over residues 1-29 the composition is skewed to polar residues; that stretch reads MQKSILLTKPDGTQSNLHSIKTETPTTVE. 2 disordered regions span residues 1–74 and 91–132; these read MQKS…RVRE and LRVV…DIEN. Residue threonine 24 is modified to Phosphothreonine. The segment covering 40–49 has biased composition (basic residues); that stretch reads RERGRSKKKR. The span at 96 to 132 shows a compositional bias: acidic residues; it reads VDSEEEGEGNDEDDDDGDGDDMDEEESDEEQVSDIEN.

Functionally, controls the nucleo-mitochondrial dependence of galactose, maltose and raffinose utilization. Becomes essential in the absence of functioning mitochondria. In Saccharomyces cerevisiae (strain ATCC 204508 / S288c) (Baker's yeast), this protein is Sugar utilization regulatory protein IMP2 (IMP2').